A 179-amino-acid chain; its full sequence is Large ribosomal subunit protein uL5 (179 aa).

It belongs to the universal ribosomal protein uL5 family. Part of the 50S ribosomal subunit; part of the 5S rRNA/L5/L18/L25 subcomplex. Contacts the 5S rRNA and the P site tRNA. Forms a bridge to the 30S subunit in the 70S ribosome.

Functionally, this is one of the proteins that bind and probably mediate the attachment of the 5S RNA into the large ribosomal subunit, where it forms part of the central protuberance. In the 70S ribosome it contacts protein S13 of the 30S subunit (bridge B1b), connecting the 2 subunits; this bridge is implicated in subunit movement. Contacts the P site tRNA; the 5S rRNA and some of its associated proteins might help stabilize positioning of ribosome-bound tRNAs. This is Large ribosomal subunit protein uL5 from Nitrosomonas europaea (strain ATCC 19718 / CIP 103999 / KCTC 2705 / NBRC 14298).